The chain runs to 242 residues: UPF0173 metal-dependent hydrolase APE_1117 (242 aa).

It belongs to the UPF0173 family.

The sequence is that of UPF0173 metal-dependent hydrolase APE_1117 from Aeropyrum pernix (strain ATCC 700893 / DSM 11879 / JCM 9820 / NBRC 100138 / K1).